We begin with the raw amino-acid sequence, 266 residues long: Glucosamine-6-phosphate deaminase (266 aa).

The active-site Proton acceptor; for enolization step is the Asp72. Asp141 (for ring-opening step) is an active-site residue. His143 acts as the Proton acceptor; for ring-opening step in catalysis. Catalysis depends on Glu148, which acts as the For ring-opening step.

The protein belongs to the glucosamine/galactosamine-6-phosphate isomerase family. NagB subfamily. Homohexamer; trimer of disulfide-linked dimers.

It catalyses the reaction alpha-D-glucosamine 6-phosphate + H2O = beta-D-fructose 6-phosphate + NH4(+). It participates in amino-sugar metabolism; N-acetylneuraminate degradation; D-fructose 6-phosphate from N-acetylneuraminate: step 5/5. With respect to regulation, allosterically activated by N-acetylglucosamine 6-phosphate (GlcNAc6P). Its function is as follows. Catalyzes the reversible isomerization-deamination of glucosamine 6-phosphate (GlcN6P) to form fructose 6-phosphate (Fru6P) and ammonium ion. The chain is Glucosamine-6-phosphate deaminase from Shigella flexneri serotype 5b (strain 8401).